The chain runs to 325 residues: Tetraacyldisaccharide 4'-kinase (325 aa).

55-62 (TAGGNGKT) serves as a coordination point for ATP.

Belongs to the LpxK family.

The enzyme catalyses a lipid A disaccharide + ATP = a lipid IVA + ADP + H(+). The protein operates within glycolipid biosynthesis; lipid IV(A) biosynthesis; lipid IV(A) from (3R)-3-hydroxytetradecanoyl-[acyl-carrier-protein] and UDP-N-acetyl-alpha-D-glucosamine: step 6/6. Functionally, transfers the gamma-phosphate of ATP to the 4'-position of a tetraacyldisaccharide 1-phosphate intermediate (termed DS-1-P) to form tetraacyldisaccharide 1,4'-bis-phosphate (lipid IVA). The polypeptide is Tetraacyldisaccharide 4'-kinase (Salmonella newport (strain SL254)).